A 119-amino-acid polypeptide reads, in one-letter code: Large ribosomal subunit protein bL20 (119 aa).

This sequence belongs to the bacterial ribosomal protein bL20 family.

In terms of biological role, binds directly to 23S ribosomal RNA and is necessary for the in vitro assembly process of the 50S ribosomal subunit. It is not involved in the protein synthesizing functions of that subunit. The chain is Large ribosomal subunit protein bL20 from Clostridium kluyveri (strain NBRC 12016).